Consider the following 37-residue polypeptide: Large ribosomal subunit protein bL36c (37 aa).

Belongs to the bacterial ribosomal protein bL36 family.

The protein resides in the plastid. It localises to the chloroplast. In Oltmannsiellopsis viridis (Marine flagellate), this protein is Large ribosomal subunit protein bL36c.